Here is a 118-residue protein sequence, read N- to C-terminus: Large ribosomal subunit protein uL22 (118 aa).

It belongs to the universal ribosomal protein uL22 family. As to quaternary structure, part of the 50S ribosomal subunit.

Functionally, this protein binds specifically to 23S rRNA; its binding is stimulated by other ribosomal proteins, e.g. L4, L17, and L20. It is important during the early stages of 50S assembly. It makes multiple contacts with different domains of the 23S rRNA in the assembled 50S subunit and ribosome. The globular domain of the protein is located near the polypeptide exit tunnel on the outside of the subunit, while an extended beta-hairpin is found that lines the wall of the exit tunnel in the center of the 70S ribosome. The sequence is that of Large ribosomal subunit protein uL22 from Leuconostoc citreum (strain KM20).